Consider the following 714-residue polypeptide: Glutamine-dependent NAD(+) synthetase (714 aa).

The region spanning 5–275 (ITLATCNLNQ…VEVVTATVDL (271 aa)) is the CN hydrolase domain. Glu45 functions as the Proton acceptor; for glutaminase activity in the catalytic mechanism. Lys114 functions as the For glutaminase activity in the catalytic mechanism. Residue Cys175 is the Nucleophile; for glutaminase activity of the active site. The ligase stretch occupies residues 329–714 (YHSPEEEIAL…GSTLDIMSID (386 aa)). 359 to 366 (PLSGGIDS) serves as a coordination point for ATP. Ser361 is an active-site residue.

This sequence in the C-terminal section; belongs to the NAD synthetase family.

The catalysed reaction is deamido-NAD(+) + L-glutamine + ATP + H2O = L-glutamate + AMP + diphosphate + NAD(+) + H(+). It participates in cofactor biosynthesis; NAD(+) biosynthesis; NAD(+) from deamido-NAD(+) (L-Gln route): step 1/1. The protein is Glutamine-dependent NAD(+) synthetase (QNS1) of Saccharomyces cerevisiae (strain ATCC 204508 / S288c) (Baker's yeast).